The primary structure comprises 517 residues: Ascochitine biosynthesis cluster MFS transporter (517 aa).

Positions 1-12 are enriched in basic and acidic residues; sequence MSPDSRDPEAQR. Residues 1-45 form a disordered region; it reads MSPDSRDPEAQRDVGLTKNTSSVNIPLESVKTDKTSNASPIMGPG. The N-linked (GlcNAc...) asparagine glycan is linked to asparagine 19. 12 consecutive transmembrane segments (helical) span residues 75–95, 111–131, 141–161, 172–192, 204–224, 232–252, 308–328, 347–367, 390–410, 421–441, 457–475, and 485–505; these read WVIT…STIF, VVMT…PLIW, LTPF…VGVA, FFIG…LADI, VYAA…GFVV, WTAW…LVFV, ILLL…LFFV, ALPL…ILFV, LMMV…WTSS, AGFP…SFLI, LIRS…PMYH, and LLGF…YYGP.

It belongs to the major facilitator superfamily. CAR1 family.

It is found in the membrane. Functionally, MFS transporter; part of the gene cluster that mediates the biosynthesis the mycotoxin ascochitine, an o-quinone methide that plays a possible protective role against other microbial competitors in nature and is considered to be important for pathogenicity of legume-associated Didymella species. In Didymella fabae (Leaf and pod spot disease fungus), this protein is Ascochitine biosynthesis cluster MFS transporter.